Reading from the N-terminus, the 63-residue chain is Large ribosomal subunit protein uL30 (63 aa).

Belongs to the universal ribosomal protein uL30 family. In terms of assembly, part of the 50S ribosomal subunit.

This chain is Large ribosomal subunit protein uL30, found in Rickettsia typhi (strain ATCC VR-144 / Wilmington).